Consider the following 165-residue polypeptide: Probable calcium-binding protein CML18 (165 aa).

4 EF-hand domains span residues 16-51 (EQLA…LGLK), 52-87 (PSQD…DLVK), 90-125 (YTDD…LGHA), and 126-161 (LTAE…AAFD). Residues Asp29, Asn31, Asp33, Ser35, Glu40, Asp65, Asn67, Asn69, Glu76, Asp103, Asp105, Asn107, Tyr109, Glu114, Asp139, Asp141, Asp143, Cys145, and Glu150 each contribute to the Ca(2+) site.

In terms of assembly, calcium and pH-dependent interaction with NHX1 (increases when pH decreases, better at pH 5.5 than at pH 7.5). Also interacts with the CPB protein At2g18750.

The protein resides in the vacuole. Functionally, potential calcium sensor that modulates ion selectivity of NHX1. The protein is Probable calcium-binding protein CML18 (CML18) of Arabidopsis thaliana (Mouse-ear cress).